The chain runs to 249 residues: Adenylate kinase (249 aa).

43–48 (GAGKGT) serves as a coordination point for ATP. The segment at 63–92 (ATGDMLRAQVAAKTALGVEAKKIMDQGGLV) is NMP. Residues threonine 64, arginine 69, 90 to 92 (GLV), 119 to 122 (GFPR), and glutamine 126 contribute to the AMP site. The tract at residues 160 to 197 (GRLVHPASGRSYHKLFNPPKKNMIDDITGEPLVQRSDD) is LID. Residues arginine 161 and 170–171 (SY) contribute to the ATP site. AMP contacts are provided by arginine 194 and arginine 205. Glutamine 233 is an ATP binding site.

It belongs to the adenylate kinase family. AK2 subfamily. As to quaternary structure, monomer.

Its subcellular location is the cytoplasm. It localises to the cytosol. The protein resides in the mitochondrion intermembrane space. It carries out the reaction AMP + ATP = 2 ADP. Catalyzes the reversible transfer of the terminal phosphate group between ATP and AMP. Plays an important role in cellular energy homeostasis and in adenine nucleotide metabolism. Adenylate kinase activity is critical for regulation of the phosphate utilization and the AMP de novo biosynthesis pathways. The protein is Adenylate kinase of Scheffersomyces stipitis (strain ATCC 58785 / CBS 6054 / NBRC 10063 / NRRL Y-11545) (Yeast).